We begin with the raw amino-acid sequence, 470 residues long: Carboxypeptidase Q (470 aa).

The signal sequence occupies residues 1 to 18; sequence MRSLFFLFIVHLLALGSG. The propeptide occupies 19 to 42; that stretch reads KAVFKNGVSQRTFREIKEEIANYE. An N-linked (GlcNAc...) asparagine glycan is attached at Asn59. Residues His288 and Asp300 each coordinate Zn(2+). Glu334 (nucleophile) is an active-site residue. Glu335 contributes to the Zn(2+) binding site. Residue Asn351 is glycosylated (N-linked (GlcNAc...) asparagine). Residue Asp362 coordinates Zn(2+). The N-linked (GlcNAc...) asparagine glycan is linked to Asn394. Position 432 (His432) interacts with Zn(2+).

The protein belongs to the peptidase M28 family. As to quaternary structure, homodimer. The monomeric form is inactive while the homodimer is active. Post-translationally, N-glycosylated. The secreted form is modified by hybrid or complex type oligosaccharide chains.

The protein resides in the endoplasmic reticulum. The protein localises to the golgi apparatus. It is found in the lysosome. It localises to the secreted. Its function is as follows. Carboxypeptidase that may play an important role in the hydrolysis of circulating peptides. Catalyzes the hydrolysis of dipeptides with unsubstituted terminals into amino acids. May play a role in the liberation of thyroxine hormone from its thyroglobulin (Tg) precursor. This chain is Carboxypeptidase Q (Cpq), found in Mus musculus (Mouse).